Consider the following 186-residue polypeptide: Ribosome-recycling factor (186 aa).

Belongs to the RRF family.

Its subcellular location is the cytoplasm. In terms of biological role, responsible for the release of ribosomes from messenger RNA at the termination of protein biosynthesis. May increase the efficiency of translation by recycling ribosomes from one round of translation to another. This is Ribosome-recycling factor from Burkholderia cenocepacia (strain HI2424).